The sequence spans 691 residues: UvrABC system protein C (691 aa).

In terms of domain architecture, GIY-YIG spans 20 to 97 (STSGVYLWKD…IKKHTPRYNI (78 aa)). In terms of domain architecture, UVR spans 204–239 (DATVARLEKRMKRAVRQEAFEAAARIRDDIQAIRCI). Residues 662 to 691 (RSTTAPVREEYKEHEHDPQGESPGPGRKTD) form a disordered region. A compositionally biased stretch (basic and acidic residues) spans 668–680 (VREEYKEHEHDPQ).

Belongs to the UvrC family. In terms of assembly, interacts with UvrB in an incision complex.

Its subcellular location is the cytoplasm. The UvrABC repair system catalyzes the recognition and processing of DNA lesions. UvrC both incises the 5' and 3' sides of the lesion. The N-terminal half is responsible for the 3' incision and the C-terminal half is responsible for the 5' incision. The sequence is that of UvrABC system protein C from Treponema pallidum (strain Nichols).